A 567-amino-acid chain; its full sequence is MGMAWIVLLLGAGAIIYNHVYRKRMYREIDRLEEWKINLMNRPVPDELAKVKQLNMTGETEQLFERWRQQWDDIVAVKLPNVEEQLFDAERLLDKYRYRQARRLLGQIADGLRRLEEEVHEIIHEVNELIGSEEQSRAEIEELRAAHREAKKALLAYRYTFGSAADLLDVRLTEAEKQFQRFAELTEAGNYLAARDVVLTLKEELGRLTAMMEEIPKLLGECQTSLPAQLAELADGYREMEERGYILDHLHMERTLQEKREKIEQCLAMIHELRIEEAKQIVAELKEEIDALYDLLENEVLAHQYVQTEMPRLSGMLQELAAEAKETEAEALFVQQSYHLAPSDLEKYRSIEKQLHQLQKRFFLIQDRVAEAKTAYSLLKEELEQLVSQIDLMKEEHEQFRTMLQTLRKDELIAREKLDGMRKTLAEALRLVQKSRLPGLPEPYALELAEARRSLQAVAARLEEKPLDMPAVDQALEEAKAAVERLYERTVEMIEQATLAERTIQYGNRYRRRYPAVRKGLEEAEFLFRHYDYEEALRQAVAAVEEVEPGAFDRVQKLWQEDNSREQ.

The Extracellular portion of the chain corresponds to 1-2 (MG). A helical transmembrane segment spans residues 3–21 (MAWIVLLLGAGAIIYNHVY). The Cytoplasmic portion of the chain corresponds to 22–567 (RKRMYREIDR…LWQEDNSREQ (546 aa)). 2 coiled-coil regions span residues 98-159 (YRQA…AYRY) and 251-497 (HMER…IEQA).

Belongs to the EzrA family.

The protein localises to the cell membrane. Its function is as follows. Negative regulator of FtsZ ring formation; modulates the frequency and position of FtsZ ring formation. Inhibits FtsZ ring formation at polar sites. Interacts either with FtsZ or with one of its binding partners to promote depolymerization. The protein is Septation ring formation regulator EzrA of Geobacillus kaustophilus (strain HTA426).